Consider the following 230-residue polypeptide: Cutinase (230 aa).

An N-terminal signal peptide occupies residues 1–16 (MKFFALTTFLAATASA). Cysteines 47 and 125 form a disulfide. Catalysis depends on Ser136, which acts as the Nucleophile. Residues Cys187 and Cys194 are joined by a disulfide bond. Residue Asp191 is part of the active site. The active-site Proton donor/acceptor is His204.

This sequence belongs to the cutinase family. Post-translationally, the 2 disulfide bonds play a critical role in holding the catalytic residues in juxta-position; reduction of the disulfide bridges results in the complete inactivation of the enzyme.

Its subcellular location is the secreted. It catalyses the reaction cutin + H2O = cutin monomers.. In terms of biological role, catalyzes the hydrolysis of complex carboxylic polyesters found in the cell wall of plants. Degrades cutin, a macromolecule that forms the structure of the plant cuticle. Allows pathogenic fungi to penetrate through the cuticular barrier into the host plant during the initial stage of fungal infection. This is Cutinase (CUTA) from Fusarium solani subsp. cucurbitae (Neocosmosporum cucurbitae).